The following is a 100-amino-acid chain: Urease subunit gamma (100 aa).

The protein belongs to the urease gamma subunit family. As to quaternary structure, heterotrimer of UreA (gamma), UreB (beta) and UreC (alpha) subunits. Three heterotrimers associate to form the active enzyme.

The protein resides in the cytoplasm. It carries out the reaction urea + 2 H2O + H(+) = hydrogencarbonate + 2 NH4(+). It participates in nitrogen metabolism; urea degradation; CO(2) and NH(3) from urea (urease route): step 1/1. The chain is Urease subunit gamma from Stutzerimonas stutzeri (strain A1501) (Pseudomonas stutzeri).